A 249-amino-acid chain; its full sequence is ATP synthase subunit a (249 aa).

The next 6 membrane-spanning stretches (helical) occupy residues 30–50 (QSPVMMIVASVLVLAFLYVGM), 86–106 (FFPFIFTLFFFILAGNYLGLL), 115–135 (HIAVTLALALLVFVLAVIVSL), 142–162 (FFAHFMPAGAPVALAPLLVPI), 191–211 (MFAAFTIMLAGLGLFGDVLAV), and 218–238 (VALMALELLVGALQAYVFAIL).

This sequence belongs to the ATPase A chain family. In terms of assembly, F-type ATPases have 2 components, CF(1) - the catalytic core - and CF(0) - the membrane proton channel. CF(1) has five subunits: alpha(3), beta(3), gamma(1), delta(1), epsilon(1). CF(0) has three main subunits: a(1), b(2) and c(9-12). The alpha and beta chains form an alternating ring which encloses part of the gamma chain. CF(1) is attached to CF(0) by a central stalk formed by the gamma and epsilon chains, while a peripheral stalk is formed by the delta and b chains.

The protein localises to the cell inner membrane. Key component of the proton channel; it plays a direct role in the translocation of protons across the membrane. This chain is ATP synthase subunit a, found in Gluconacetobacter diazotrophicus (strain ATCC 49037 / DSM 5601 / CCUG 37298 / CIP 103539 / LMG 7603 / PAl5).